The following is a 421-amino-acid chain: Probable sugar-binding periplasmic protein (421 aa).

Residues 1–27 (MHKLLKLAAMGTAACALLAGMAPVANA) form the signal peptide.

It belongs to the bacterial solute-binding protein 1 family.

Its subcellular location is the periplasm. Part of a binding-protein-dependent transport system for a sugar. The protein is Probable sugar-binding periplasmic protein of Brucella suis biovar 1 (strain 1330).